A 243-amino-acid chain; its full sequence is Glucosamine-6-phosphate deaminase (243 aa).

The active-site Proton acceptor; for enolization step is the D67. Residue N137 is the For ring-opening step of the active site. Residue H139 is the Proton acceptor; for ring-opening step of the active site. The For ring-opening step role is filled by E144.

Belongs to the glucosamine/galactosamine-6-phosphate isomerase family. NagB subfamily.

The enzyme catalyses alpha-D-glucosamine 6-phosphate + H2O = beta-D-fructose 6-phosphate + NH4(+). It functions in the pathway amino-sugar metabolism; N-acetylneuraminate degradation; D-fructose 6-phosphate from N-acetylneuraminate: step 5/5. Its function is as follows. Catalyzes the reversible isomerization-deamination of glucosamine 6-phosphate (GlcN6P) to form fructose 6-phosphate (Fru6P) and ammonium ion. The polypeptide is Glucosamine-6-phosphate deaminase (Staphylococcus epidermidis (strain ATCC 35984 / DSM 28319 / BCRC 17069 / CCUG 31568 / BM 3577 / RP62A)).